The following is a 405-amino-acid chain: Enoyl-[acyl-carrier-protein] reductase [NADH] (405 aa).

Residues 48 to 53 (GASSGY), 74 to 75 (FE), 111 to 112 (DA), and 140 to 141 (LA) contribute to the NAD(+) site. Tyrosine 226 serves as a coordination point for substrate. Tyrosine 236 serves as the catalytic Proton donor. NAD(+) contacts are provided by residues lysine 245 and 274-276 (VVT).

Belongs to the TER reductase family. In terms of assembly, monomer.

The catalysed reaction is a 2,3-saturated acyl-[ACP] + NAD(+) = a (2E)-enoyl-[ACP] + NADH + H(+). It participates in lipid metabolism; fatty acid biosynthesis. Its function is as follows. Involved in the final reduction of the elongation cycle of fatty acid synthesis (FAS II). Catalyzes the reduction of a carbon-carbon double bond in an enoyl moiety that is covalently linked to an acyl carrier protein (ACP). The sequence is that of Enoyl-[acyl-carrier-protein] reductase [NADH] from Xanthomonas oryzae pv. oryzae (strain PXO99A).